A 445-amino-acid chain; its full sequence is Probable D-serine dehydratase (445 aa).

Lys116 carries the N6-(pyridoxal phosphate)lysine modification.

The protein belongs to the serine/threonine dehydratase family. DsdA subfamily. Pyridoxal 5'-phosphate is required as a cofactor.

It carries out the reaction D-serine = pyruvate + NH4(+). This chain is Probable D-serine dehydratase, found in Bacillus mycoides (strain KBAB4) (Bacillus weihenstephanensis).